The following is a 619-amino-acid chain: MLWQALRRFGQKLVRRRLLELGMGETRLARCLSTLDLVALGVGSTLGAGVYVLAGEVAKEKAGPSIVICFLVAALSSVLAGLCYAEFGARVPGSGSAYLYSYVTVGELWAFTTGWNLILSYVIGTASVARAWSSAFDNLIGNHISQTLKGTILLNMPHVLAEYPDFFALALVLLLTGLLVLGANESGLVTKVFTGMNLLVLGFVIISGFIKGELRNWKLTKEDYCLTMSESNGTCSLDSMGSGGFMPFGLEGILRGAATCFYAFVGFDCIATTGEEAQNPQRSIPMGIVISLSICFLAYFGVSSALTLMMPYYKLQPESPLPEAFTYVGWEPARYLVAIGSLCALSTSLLGSMFPMPRVIYAMAEDGLLFRVLARVHNGTHTPIVATVVSGVIAAFMAFLFELTDLVDLMSIGTLLAYSLVSICVLILRYQPDQEMKNGEEEVELQEERTLEAEKLTVQALFCQVDSIPTLLSGRIVYVCSSLLAVLLTVLCLVLTWWTTPLHSGDPVWVTVVVLILGLILGISGVIWRQPQNRTPLHFKVPVVPLLPLVSIFVNVYLMMQMTADTWARFGVWMLIGFAIYFGYGIQHSVEEVKNHQTLPKTRPQTIDLDLTTSCVHSI.

Topologically, residues 1 to 36 (MLWQALRRFGQKLVRRRLLELGMGETRLARCLSTLD) are cytoplasmic. A helical transmembrane segment spans residues 37–57 (LVALGVGSTLGAGVYVLAGEV). At 58–61 (AKEK) the chain is on the extracellular side. The chain crosses the membrane as a helical span at residues 62 to 82 (AGPSIVICFLVAALSSVLAGL). The Cytoplasmic segment spans residues 83-107 (CYAEFGARVPGSGSAYLYSYVTVGE). Residues 108–128 (LWAFTTGWNLILSYVIGTASV) form a helical membrane-spanning segment. At 129–162 (ARAWSSAFDNLIGNHISQTLKGTILLNMPHVLAE) the chain is on the extracellular side. A helical membrane pass occupies residues 163–183 (YPDFFALALVLLLTGLLVLGA). At 184–191 (NESGLVTK) the chain is on the cytoplasmic side. A helical transmembrane segment spans residues 192–212 (VFTGMNLLVLGFVIISGFIKG). Over 213–244 (ELRNWKLTKEDYCLTMSESNGTCSLDSMGSGG) the chain is Extracellular. Residue Asn232 is glycosylated (N-linked (GlcNAc...) asparagine). Residues 245–265 (FMPFGLEGILRGAATCFYAFV) traverse the membrane as a helical segment. The Cytoplasmic segment spans residues 266 to 285 (GFDCIATTGEEAQNPQRSIP). A helical transmembrane segment spans residues 286–306 (MGIVISLSICFLAYFGVSSAL). The Extracellular portion of the chain corresponds to 307–335 (TLMMPYYKLQPESPLPEAFTYVGWEPARY). The chain crosses the membrane as a helical span at residues 336–356 (LVAIGSLCALSTSLLGSMFPM). At 357–382 (PRVIYAMAEDGLLFRVLARVHNGTHT) the chain is on the cytoplasmic side. A helical membrane pass occupies residues 383-403 (PIVATVVSGVIAAFMAFLFEL). At 404 to 406 (TDL) the chain is on the extracellular side. Residues 407–427 (VDLMSIGTLLAYSLVSICVLI) form a helical membrane-spanning segment. Over 428–475 (LRYQPDQEMKNGEEEVELQEERTLEAEKLTVQALFCQVDSIPTLLSGR) the chain is Cytoplasmic. Residues 476–496 (IVYVCSSLLAVLLTVLCLVLT) form a helical membrane-spanning segment. Residues 497 to 507 (WWTTPLHSGDP) are Extracellular-facing. A helical transmembrane segment spans residues 508–528 (VWVTVVVLILGLILGISGVIW). Residues 529–540 (RQPQNRTPLHFK) lie on the Cytoplasmic side of the membrane. The chain crosses the membrane as a helical span at residues 541–561 (VPVVPLLPLVSIFVNVYLMMQ). Residues 562–569 (MTADTWAR) lie on the Extracellular side of the membrane. Residues 570–590 (FGVWMLIGFAIYFGYGIQHSV) traverse the membrane as a helical segment. Topologically, residues 591–619 (EEVKNHQTLPKTRPQTIDLDLTTSCVHSI) are cytoplasmic. Position 606 is a phosphothreonine (Thr606). A Phosphoserine modification is found at Ser618.

Belongs to the amino acid-polyamine-organocation (APC) superfamily. Cationic amino acid transporter (CAT) (TC 2.A.3.3) family. Post-translationally, N-glycosylated. Highly expressed in brain.

It is found in the cell membrane. The catalysed reaction is L-arginine(in) = L-arginine(out). It catalyses the reaction L-lysine(in) = L-lysine(out). The enzyme catalyses L-ornithine(in) = L-ornithine(out). With respect to regulation, inhibited by high potassium ions-induced membrane depolarization. Functionally, uniporter that mediates the uptake of cationic L-amino acids such as L-arginine, L-lysine and L-ornithine. The transport is sodium ions- and pH-independent, moderately trans-stimulated and is mediated by passive diffusion. This is Cationic amino acid transporter 3 from Rattus norvegicus (Rat).